A 253-amino-acid chain; its full sequence is Triosephosphate isomerase, cytosolic (253 aa).

Residues N10 and K12 each contribute to the substrate site. Catalysis depends on H96, which acts as the Electrophile. E166 serves as the catalytic Proton acceptor.

Belongs to the triosephosphate isomerase family. As to quaternary structure, homodimer.

The protein localises to the cytoplasm. The enzyme catalyses D-glyceraldehyde 3-phosphate = dihydroxyacetone phosphate. The protein operates within carbohydrate biosynthesis; gluconeogenesis. Its pathway is carbohydrate degradation; glycolysis; D-glyceraldehyde 3-phosphate from glycerone phosphate: step 1/1. This chain is Triosephosphate isomerase, cytosolic, found in Coptis japonica (Japanese goldthread).